The following is a 192-amino-acid chain: uncharacterized protein (192 aa).

The Nudix hydrolase domain occupies 29 to 160 (HRQAAVLIPI…PLDIYRRGDS (132 aa)). Residues 67-89 (GAVDDTDASVIAAALREAEEEVA) carry the Nudix box motif. Residues Glu83 and Glu87 each contribute to the Mg(2+) site.

This sequence belongs to the Nudix hydrolase family. PCD1 subfamily. It depends on Mn(2+) as a cofactor. Mg(2+) is required as a cofactor.

Functionally, probably mediates the hydrolysis of some nucleoside diphosphate derivatives. This is an uncharacterized protein from Shigella boydii serotype 4 (strain Sb227).